Here is a 202-residue protein sequence, read N- to C-terminus: ATP-dependent Clp protease proteolytic subunit (202 aa).

Catalysis depends on Ser106, which acts as the Nucleophile. Residue His131 is part of the active site.

Belongs to the peptidase S14 family. As to quaternary structure, fourteen ClpP subunits assemble into 2 heptameric rings which stack back to back to give a disk-like structure with a central cavity, resembling the structure of eukaryotic proteasomes.

It localises to the cytoplasm. The catalysed reaction is Hydrolysis of proteins to small peptides in the presence of ATP and magnesium. alpha-casein is the usual test substrate. In the absence of ATP, only oligopeptides shorter than five residues are hydrolyzed (such as succinyl-Leu-Tyr-|-NHMec, and Leu-Tyr-Leu-|-Tyr-Trp, in which cleavage of the -Tyr-|-Leu- and -Tyr-|-Trp bonds also occurs).. Functionally, cleaves peptides in various proteins in a process that requires ATP hydrolysis. Has a chymotrypsin-like activity. Plays a major role in the degradation of misfolded proteins. In Verminephrobacter eiseniae (strain EF01-2), this protein is ATP-dependent Clp protease proteolytic subunit.